Consider the following 479-residue polypeptide: Nuclear receptor subfamily 6 group A member 1 (479 aa).

Residues 1-32 (MERDERPPSGGGGGGGSAGFLEPPAALPPPPR) are disordered. A compositionally biased stretch (gly residues) spans 9-18 (SGGGGGGGSA). Residues 57 to 132 (QRTCLICGDR…MGMNRKAIRE (76 aa)) constitute a DNA-binding region (nuclear receptor). Zn(2+) is bound by residues Cys60, Cys63, Cys77, Cys80, Cys96, Cys102, Cys112, and Cys115. 2 NR C4-type zinc fingers span residues 60–80 (CLIC…CEGC) and 96–120 (CSRD…LLKC). 2 disordered regions span residues 131–150 (REDG…QISE) and 162–198 (FEEE…TLSS). The span at 165-177 (EANHWSNHGDSDH) shows a compositional bias: basic and acidic residues. The sufficient for interaction with UIMC1 stretch occupies residues 172–252 (HGDSDHSSPG…RSLDPQSYSL (81 aa)). The span at 178–198 (SSPGNRASESNQPSPGSTLSS) shows a compositional bias: polar residues. The region spanning 248-479 (QSYSLIHQLV…HSCKTSVGKE (232 aa)) is the NR LBD domain.

It belongs to the nuclear hormone receptor family. NR6 subfamily. As to quaternary structure, homodimer. Interacts with UIMC1.

It is found in the nucleus. In terms of biological role, orphan nuclear receptor that binds to a response element containing the sequence 5'-TCAAGGTCA-3'. Acts as a regulator of embryonic stem cell pluripotency by mediating repression of POU5F1/OCT4: binds to the DR0 element within the POU5F1/OCT4 promoter and inhibits POU5F1/OCT4 expression during embryonic stem cell differentiation. Involved in the regulation of gene expression in germ cell development during gametogenesis. This Sus scrofa (Pig) protein is Nuclear receptor subfamily 6 group A member 1 (NR6A1).